We begin with the raw amino-acid sequence, 412 residues long: Orcinol synthase (412 aa).

Residues Cys-164, His-322, and Asn-355 contribute to the active site.

It belongs to the thiolase-like superfamily. Chalcone/stilbene synthases family. Homodimer. As to expression, mainly expressed in young leaves, and barely in mature leaves and twigs.

The enzyme catalyses 3 malonyl-CoA + acetyl-CoA + 3 H(+) = orcinol + 4 CO2 + 4 CoA. It carries out the reaction 3 malonyl-CoA + acetyl-CoA + 2 H(+) = orsellinate + 3 CO2 + 4 CoA. It catalyses the reaction 3 malonyl-CoA + acetyl-CoA + 3 H(+) = tetraacetate lactone + 3 CO2 + 4 CoA. The catalysed reaction is 2 malonyl-CoA + acetyl-CoA + 2 H(+) = triacetate lactone + 2 CO2 + 3 CoA. The enzyme catalyses 3 malonyl-CoA + acetyl-CoA + 3 H(+) = 2-acetylphloroglucinol + 3 CO2 + 4 CoA. The protein operates within secondary metabolite biosynthesis; terpenoid biosynthesis. Involved in the biosynthesis of acetate-derived aromatic tetraketides natural products, precursors of daurichromenic acid, an anti-human immunodeficiency viruses (HIV) meroterpenoid consisting of sesquiterpene and orsellinic acid (OSA) moieties. Accepts acetyl-CoA as starter substrate and produces orcinol as the major reaction product, along with four minor products including OSA, tetraacetate lactone, triacetate lactone and 2-acetylphloroglucinol. This chain is Orcinol synthase, found in Rhododendron dauricum (Azalea daurica).